The sequence spans 507 residues: Keratin, type II cuticular Hb5 (507 aa).

The interval 1–123 is head; sequence MSCRSYRISS…PNAQCVKQEE (123 aa). The IF rod domain occupies 123-434; it reads EKEQIKSLNS…RLLEGEEHRL (312 aa). Residues 124-158 are coil 1A; the sequence is KEQIKSLNSRFAAFIDKVRFLEQQNKLLETKWQFY. Residues 159-168 form a linker 1 region; sequence QNQRCCESNL. A coil 1B region spans residues 169 to 269; it reads EPLFSGYIET…YEEEIRVLQA (101 aa). Residue lysine 229 forms a Glycyl lysine isopeptide (Lys-Gly) (interchain with G-Cter in SUMO1) linkage. The tract at residues 270 to 286 is linker 12; it reads HISDTSVIVKMDNSRDL. Positions 287 to 430 are coil 2; sequence NMDCIIAEIK…ATYRRLLEGE (144 aa). The segment at 431–507 is tail; the sequence is EHRLCEGVGS…CGSSRSVRFA (77 aa).

This sequence belongs to the intermediate filament family. In terms of assembly, heterotetramer of two type I and two type II keratins. In terms of tissue distribution, synthesis occurs immediately above a small population of matrix cells at the base of the hair bulb and the trichocytes lining the dermal papilla and extends upward through the matrix and ends in the lower part of the cortex of the hair shaft.

The chain is Keratin, type II cuticular Hb5 (KRT85) from Homo sapiens (Human).